The chain runs to 1072 residues: Rho family-interacting cell polarization regulator 2 (1072 aa).

Residues Asn83–Leu112 adopt a coiled-coil conformation. Residues Arg173–Arg470 are necessary for interaction with NCAM and myoblast protrusion formation. Disordered stretches follow at residues Asp439–Thr465 and Glu683–Pro718. The segment covering Ala447–Ile460 has biased composition (polar residues). The segment covering Glu683–Gly698 has biased composition (basic and acidic residues).

It belongs to the RIPOR family. In terms of assembly, homooligomer; homooligomerization is regulated by RHOC and leads to the formation of concatemers through the association of N- and C-termini. Interacts with NCAM; this interaction is necessary for myoblast protrusion formation. As to expression, expressed in myoblast and myotubes (at protein level). Expressed in brain, eyes and skeletal muscle.

It localises to the cytoplasm. It is found in the cytoskeleton. The protein resides in the cell projection. Its subcellular location is the filopodium. The protein localises to the apical cell membrane. It localises to the stereocilium. It is found in the stereocilium membrane. Its function is as follows. Acts as an inhibitor of the small GTPase RHOA and plays several roles in the regulation of myoblast and hair cell differentiation, lymphocyte T proliferation and neutrophil polarization. Plays a role in fetal mononuclear myoblast differentiation by promoting filopodia and myotube formation. Maintains naive T lymphocytes in a quiescent state and prevents chemokine-induced T lymphocyte responses, such as cell adhesion, polarization and migration. Involved also in the regulation of neutrophil polarization, chemotaxis and adhesion. Required for normal development of inner and outer hair cell stereocilia within the cochlea of the inner ear. Plays a role for maintaining the structural organization of the basal domain of stereocilia. Involved in mechanosensory hair cell function. Required for normal hearing. The sequence is that of Rho family-interacting cell polarization regulator 2 from Coturnix japonica (Japanese quail).